Reading from the N-terminus, the 693-residue chain is MHNTLLFELGTEELPARFIPGLIKQLEENSANLLTEYRIEYENIKVMATPRRLTLLVNGLADKQQSSTTMKRGPAKEIAFDENGEPTKAAIGFARGQNIDPKDLEIREDNGKEYVYAVAEIVGENCQDVLPKLLDELITKFNLPVKMFWNNKQDKFLRPVRWLVCLFNDQVLPLNFGTVEASNISRGHRFLSQGDVIINSAENYEEVMRDSWVMVDHNVREETIKAQIEELADQMNASPEMPHDLLEEVNFLVEWPTALLGNFAEEFLEIPKEALITSMQEHQKYFALVDKEDSSKLLPYFVAVRNGDDHGIDKVKAGNERVLRARLSDARFFFEEDTKTSLESKREQLKSIIYKEQLGSVDQKVTRMEELGKTLLDILELSEPVRSLTLRAIALSKADLPTNMVSEFPHLQGIMGEKYARIHGEDEKVCLGISEHYLPRHTGDKLPQTMVGTITSIVDKVDNIASSFAIGERPSGSQDPYALRRQALGIVHIILETELAFSLEQLFHRALSLIPESALVAPISNILDDILDFVKLRSRTIFNEQGLPIDIIDSTLEVDKANVYKAYLRAKVLKDYRDSQELEDVRTAYTRVKNLANKAKGEDVYTELLQDETEKMLYHKYLNTEDKLLSDLEQDEISSAISELAGFKDYIDQFFDEVMVMVDDKHLQNNRLNLIYHIKEMYRQLADFSIIQD.

The protein belongs to the class-II aminoacyl-tRNA synthetase family. As to quaternary structure, tetramer of two alpha and two beta subunits.

It localises to the cytoplasm. The catalysed reaction is tRNA(Gly) + glycine + ATP = glycyl-tRNA(Gly) + AMP + diphosphate. The sequence is that of Glycine--tRNA ligase beta subunit from Natranaerobius thermophilus (strain ATCC BAA-1301 / DSM 18059 / JW/NM-WN-LF).